Consider the following 236-residue polypeptide: Orotidine 5'-phosphate decarboxylase (236 aa).

Residues D13, K35, 62–71 (DLKFYDIPQT), T123, R184, Q193, G213, and R214 contribute to the substrate site. The active-site Proton donor is the K64.

This sequence belongs to the OMP decarboxylase family. Type 1 subfamily. In terms of assembly, homodimer.

The enzyme catalyses orotidine 5'-phosphate + H(+) = UMP + CO2. It participates in pyrimidine metabolism; UMP biosynthesis via de novo pathway; UMP from orotate: step 2/2. Its function is as follows. Catalyzes the decarboxylation of orotidine 5'-monophosphate (OMP) to uridine 5'-monophosphate (UMP). In Coxiella burnetii (strain CbuK_Q154) (Coxiella burnetii (strain Q154)), this protein is Orotidine 5'-phosphate decarboxylase.